Consider the following 125-residue polypeptide: Small ribosomal subunit protein eS6 (125 aa).

It belongs to the eukaryotic ribosomal protein eS6 family. In terms of assembly, part of the 30S ribosomal subunit.

This chain is Small ribosomal subunit protein eS6, found in Thermococcus kodakarensis (strain ATCC BAA-918 / JCM 12380 / KOD1) (Pyrococcus kodakaraensis (strain KOD1)).